The chain runs to 638 residues: MSRDIFMKRLRLHLLFDEVAMVTHIVGDVLSSVLLCAVVLLVLVGNTLVVAAVATSRKLRTVTNVFIVNLACADLLLGVLVLPFSAVNEIKDVWIFGHVWCQVWLAVDVWLCTASILNLCCISLDRYLAITRPIRYPGLMSAKRAKTLVAGVWLFSFVICCPPLIGWNDGGDGIMDYNGTTATPIPVTTTQTPVTGRDDVLCDNGFNYSTNSNMNTTCTYSGDSSLSTTCELTNSRGYRIYAALGSFFIPMLVMVFFYLQIYRAAVKTISAYAKGELKTKYSVRENGSKTNSVTLRIHRGGRGPSTGSSVYRHGSTYGGSAAGAATREGCGDKDAAGGRRFGRQEMDSHLPVRKCRSSDASLVTLTGLKCEIIDNGNAKHGPISELIKGRGKSFFWRKEKKRSVGGERESFENSTRNGRSTRAKLCGGRCLAIETDICSSGECSPRTKRIKEHARATQHNSLPVTPSLSSQNEETDAVFVRGTSNSEYKPRRSRLSAHKPGHAMRLHMQKFNREKKAAKTLAIIVGAFIMCWMPFFTIYLVGAFCENCISPIVFSVAFWLGYCNSAMNPCVYALFSRDFRFAFRKLLTCSCKAWSKNRSFRPQTSDVPAIQLHCATQDDAKSSSDIGPTASGGNGGYT.

The Extracellular portion of the chain corresponds to 1-28; sequence MSRDIFMKRLRLHLLFDEVAMVTHIVGD. Residues 29–53 traverse the membrane as a helical segment; it reads VLSSVLLCAVVLLVLVGNTLVVAAV. Topologically, residues 54–64 are cytoplasmic; sequence ATSRKLRTVTN. A helical membrane pass occupies residues 65–87; the sequence is VFIVNLACADLLLGVLVLPFSAV. At 88-102 the chain is on the extracellular side; that stretch reads NEIKDVWIFGHVWCQ. Cys101 and Cys230 are oxidised to a cystine. A helical membrane pass occupies residues 103–124; that stretch reads VWLAVDVWLCTASILNLCCISL. The Cytoplasmic portion of the chain corresponds to 125-147; the sequence is DRYLAITRPIRYPGLMSAKRAKT. The chain crosses the membrane as a helical span at residues 148–167; the sequence is LVAGVWLFSFVICCPPLIGW. The Extracellular portion of the chain corresponds to 168–239; it reads NDGGDGIMDY…CELTNSRGYR (72 aa). Asn178, Asn207, and Asn215 each carry an N-linked (GlcNAc...) asparagine glycan. A helical transmembrane segment spans residues 240–259; it reads IYAALGSFFIPMLVMVFFYL. Residues 260-520 are Cytoplasmic-facing; sequence QIYRAAVKTI…FNREKKAAKT (261 aa). The chain crosses the membrane as a helical span at residues 521 to 545; it reads LAIIVGAFIMCWMPFFTIYLVGAFC. Topologically, residues 546–551 are extracellular; the sequence is ENCISP. A helical transmembrane segment spans residues 552-575; it reads IVFSVAFWLGYCNSAMNPCVYALF. Over 576-638 the chain is Cytoplasmic; sequence SRDFRFAFRK…TASGGNGGYT (63 aa). A disordered region spans residues 618 to 638; the sequence is DDAKSSSDIGPTASGGNGGYT.

Belongs to the G-protein coupled receptor 1 family. Expressed in the central nervous system.

The protein resides in the cell membrane. In terms of biological role, G-protein coupled receptor for octopamine (OA), which is a neurotransmitter, neurohormone, and neuromodulator in invertebrates. Activation of this receptor by octopamine induces an increase in both inositol phosphates and cyclic AMP. The coupling to adenylyl cyclase seems to be less efficient than the coupling to phospholipase C. The rank order of potency for agonists is p-synephrine &gt;= clonidine &gt; p-octopamine = xylometazoline = phenylephrine = oxymetazoline &gt; B-HT920 &gt; serotonin = p-tyramine &gt; epinephrine &gt; norepinephrine &gt; methoxamine = dopamine = histamine. For antagonists, the rank order is yohimbine &gt; chlopromazine / spiperone &gt; phentolamine &gt; mianserine &gt; rauwolscine &gt; prazosin &gt; alprenolol / propanolol &gt; pindolol. This Lymnaea stagnalis (Great pond snail) protein is Octopamine receptor 1.